Reading from the N-terminus, the 158-residue chain is Small ribosomal subunit protein uS9 (158 aa).

Positions 1–20 (MSETMQSLDQLSALKTTQPD) are enriched in polar residues. The tract at residues 1 to 29 (MSETMQSLDQLSALKTTQPDAPTYTKKVD) is disordered.

This sequence belongs to the universal ribosomal protein uS9 family.

The polypeptide is Small ribosomal subunit protein uS9 (Rhodopseudomonas palustris (strain BisB5)).